A 303-amino-acid polypeptide reads, in one-letter code: Geranylgeranyl pyrophosphate synthase (303 aa).

Isopentenyl diphosphate is bound by residues Lys-30, Arg-33, and His-62. Mg(2+) is bound by residues Asp-69 and Asp-73. Residue Arg-78 coordinates dimethylallyl diphosphate. Isopentenyl diphosphate is bound at residue Arg-79. Dimethylallyl diphosphate is bound by residues Lys-156, Thr-157, Gln-190, Lys-207, and Lys-217.

Belongs to the FPP/GGPP synthase family. It depends on Mg(2+) as a cofactor.

It is found in the cytoplasm. It catalyses the reaction isopentenyl diphosphate + dimethylallyl diphosphate = (2E)-geranyl diphosphate + diphosphate. It carries out the reaction isopentenyl diphosphate + (2E)-geranyl diphosphate = (2E,6E)-farnesyl diphosphate + diphosphate. The catalysed reaction is isopentenyl diphosphate + (2E,6E)-farnesyl diphosphate = (2E,6E,10E)-geranylgeranyl diphosphate + diphosphate. It functions in the pathway isoprenoid biosynthesis; farnesyl diphosphate biosynthesis; farnesyl diphosphate from geranyl diphosphate and isopentenyl diphosphate: step 1/1. It participates in isoprenoid biosynthesis; geranyl diphosphate biosynthesis; geranyl diphosphate from dimethylallyl diphosphate and isopentenyl diphosphate: step 1/1. The protein operates within isoprenoid biosynthesis; geranylgeranyl diphosphate biosynthesis; geranylgeranyl diphosphate from farnesyl diphosphate and isopentenyl diphosphate: step 1/1. Functionally, catalyzes the trans-addition of the three molecules of IPP onto DMAPP to form geranylgeranyl pyrophosphate. In Mucor circinelloides f. lusitanicus (Mucor racemosus var. lusitanicus), this protein is Geranylgeranyl pyrophosphate synthase.